The primary structure comprises 89 residues: Small ribosomal subunit protein bS20 (89 aa).

A compositionally biased stretch (basic and acidic residues) spans 1 to 11 (MANHKSAEKRN). The segment at 1–30 (MANHKSAEKRNRQNQVARLRNKSTRTAMKN) is disordered.

This sequence belongs to the bacterial ribosomal protein bS20 family.

Binds directly to 16S ribosomal RNA. This chain is Small ribosomal subunit protein bS20, found in Desulfotalea psychrophila (strain LSv54 / DSM 12343).